The chain runs to 200 residues: NADH-quinone oxidoreductase subunit C (200 aa).

The protein belongs to the complex I 30 kDa subunit family. As to quaternary structure, NDH-1 is composed of 14 different subunits. Subunits NuoB, C, D, E, F, and G constitute the peripheral sector of the complex.

It localises to the cell inner membrane. The catalysed reaction is a quinone + NADH + 5 H(+)(in) = a quinol + NAD(+) + 4 H(+)(out). NDH-1 shuttles electrons from NADH, via FMN and iron-sulfur (Fe-S) centers, to quinones in the respiratory chain. The immediate electron acceptor for the enzyme in this species is believed to be ubiquinone. Couples the redox reaction to proton translocation (for every two electrons transferred, four hydrogen ions are translocated across the cytoplasmic membrane), and thus conserves the redox energy in a proton gradient. In Thiobacillus denitrificans (strain ATCC 25259 / T1), this protein is NADH-quinone oxidoreductase subunit C.